The following is a 460-amino-acid chain: Probable Xaa-Pro aminopeptidase VDBG_02538 (460 aa).

The Mn(2+) site is built by aspartate 256, aspartate 267, glutamate 390, and glutamate 430.

The protein belongs to the peptidase M24B family. Requires Mn(2+) as cofactor.

It catalyses the reaction Release of any N-terminal amino acid, including proline, that is linked to proline, even from a dipeptide or tripeptide.. Its function is as follows. Catalyzes the removal of a penultimate prolyl residue from the N-termini of peptides. The chain is Probable Xaa-Pro aminopeptidase VDBG_02538 from Verticillium alfalfae (strain VaMs.102 / ATCC MYA-4576 / FGSC 10136) (Verticillium wilt of alfalfa).